A 216-amino-acid polypeptide reads, in one-letter code: Probable disulfide bond formation protein D (216 aa).

An N-terminal signal peptide occupies residues 1-25; the sequence is MKSNKLMALGIVFSIAVLIVIGTIA. Residues cysteine 65 and cysteine 68 are joined by a disulfide bond.

This sequence belongs to the thioredoxin family. DsbA subfamily.

Its function is as follows. May be required for disulfide bond formation in some proteins. This Bacillus cereus (strain ATCC 14579 / DSM 31 / CCUG 7414 / JCM 2152 / NBRC 15305 / NCIMB 9373 / NCTC 2599 / NRRL B-3711) protein is Probable disulfide bond formation protein D (bdbD).